A 344-amino-acid polypeptide reads, in one-letter code: Dihydroorotase (344 aa).

Positions 14 and 16 each coordinate Zn(2+). Substrate is bound by residues 16–18 (HVR) and N42. K99, H136, and H174 together coordinate Zn(2+). An N6-carboxylysine modification is found at K99. Substrate is bound at residue H136. L219 serves as a coordination point for substrate. D247 is a Zn(2+) binding site. The active site involves D247. Substrate is bound by residues H251 and A263.

It belongs to the metallo-dependent hydrolases superfamily. DHOase family. Class II DHOase subfamily. Homodimer. It depends on Zn(2+) as a cofactor.

It carries out the reaction (S)-dihydroorotate + H2O = N-carbamoyl-L-aspartate + H(+). It participates in pyrimidine metabolism; UMP biosynthesis via de novo pathway; (S)-dihydroorotate from bicarbonate: step 3/3. In terms of biological role, catalyzes the reversible cyclization of carbamoyl aspartate to dihydroorotate. This is Dihydroorotase from Leptothrix cholodnii (strain ATCC 51168 / LMG 8142 / SP-6) (Leptothrix discophora (strain SP-6)).